Reading from the N-terminus, the 137-residue chain is Small ribosomal subunit protein uS12 (137 aa).

Residue Asp-89 is modified to 3-methylthioaspartic acid. A disordered region spans residues Ala-105–Lys-137. The span at Thr-111 to Lys-123 shows a compositional bias: basic residues. The span at Ala-124 to Lys-137 shows a compositional bias: low complexity.

It belongs to the universal ribosomal protein uS12 family. Part of the 30S ribosomal subunit. Contacts proteins S8 and S17. May interact with IF1 in the 30S initiation complex.

Its function is as follows. With S4 and S5 plays an important role in translational accuracy. In terms of biological role, interacts with and stabilizes bases of the 16S rRNA that are involved in tRNA selection in the A site and with the mRNA backbone. Located at the interface of the 30S and 50S subunits, it traverses the body of the 30S subunit contacting proteins on the other side and probably holding the rRNA structure together. The combined cluster of proteins S8, S12 and S17 appears to hold together the shoulder and platform of the 30S subunit. The polypeptide is Small ribosomal subunit protein uS12 (Phocaeicola vulgatus (strain ATCC 8482 / DSM 1447 / JCM 5826 / CCUG 4940 / NBRC 14291 / NCTC 11154) (Bacteroides vulgatus)).